A 580-amino-acid chain; its full sequence is Arginine--tRNA ligase (580 aa).

The 'HIGH' region signature appears at 131-141 (ANPTGPLHVGH).

Belongs to the class-I aminoacyl-tRNA synthetase family. As to quaternary structure, monomer.

Its subcellular location is the cytoplasm. The enzyme catalyses tRNA(Arg) + L-arginine + ATP = L-arginyl-tRNA(Arg) + AMP + diphosphate. The chain is Arginine--tRNA ligase from Ruegeria sp. (strain TM1040) (Silicibacter sp.).